The following is a 371-amino-acid chain: Protease PrtS (371 aa).

H169 contributes to the Zn(2+) binding site. E170 is an active-site residue. Positions 173 and 193 each coordinate Zn(2+). The active-site Proton donor is the H273. Residues 352-371 (KEEDKDKGKDEGKDKAETKV) form a disordered region.

This sequence belongs to the peptidase M4 family. The cofactor is Zn(2+).

It localises to the secreted. With respect to regulation, inhibited by 8 mM 1,10-phenanthroline, but not by EDTA or PMSF. Functionally, metalloprotease involved in the inhibition of insect antibacterial peptides. Reduces the antibacterial activity of G.mellonella hemolymph by 50%. Reduces the antibacterial activity of cecropin A by 80% and completely inhibits cecropin B. In Photorhabdus sp. (strain Az29), this protein is Protease PrtS.